The primary structure comprises 211 residues: Thymidylate kinase (211 aa).

11 to 18 is a binding site for ATP; that stretch reads GPDGAGKT.

It belongs to the thymidylate kinase family.

It catalyses the reaction dTMP + ATP = dTDP + ADP. Functionally, phosphorylation of dTMP to form dTDP in both de novo and salvage pathways of dTTP synthesis. The polypeptide is Thymidylate kinase (Streptococcus pyogenes serotype M6 (strain ATCC BAA-946 / MGAS10394)).